We begin with the raw amino-acid sequence, 254 residues long: Type II methyl-directed restriction enzyme DpnI (254 aa).

The protein belongs to the DpnI type II restriction endonuclease family.

The enzyme catalyses Endonucleolytic cleavage of DNA to give specific double-stranded fragments with terminal 5'-phosphates.. In terms of biological role, an M and P subtype restriction enzyme that recognizes the double-stranded, methylated sequence 5'-G(Me)ATC-3' and cleaves after A-2. The protein is Type II methyl-directed restriction enzyme DpnI of Streptococcus pneumoniae serotype 4 (strain ATCC BAA-334 / TIGR4).